Reading from the N-terminus, the 85-residue chain is U4-theraphotoxin-Hhn1a (85 aa).

The signal sequence occupies residues 1 to 22; the sequence is MKVTLIAILTCAAVLVLHTTAA. Positions 23–48 are excised as a propeptide; that stretch reads EELEAESQLMEVGMPDTELAAVDEER. Cystine bridges form between Cys-52-Cys-66, Cys-56-Cys-77, and Cys-71-Cys-82.

This sequence belongs to the neurotoxin 12 (Hwtx-2) family. 02 (Hwtx-2) subfamily. As to quaternary structure, monomer. Expressed by the venom gland.

The protein localises to the secreted. In terms of biological role, neurotoxin active on both insects and mammals. This Cyriopagopus hainanus (Chinese bird spider) protein is U4-theraphotoxin-Hhn1a.